Reading from the N-terminus, the 525-residue chain is MNLCLIDPFKQSDVPETVEYYLVDPKNIKSNCASFNRRGTLLAVGCASPIGKILVWDFDTKKIVRTLYHHTGCVNSISWSRNGKKLLTASNDGSLVLWDLATSKILYSLELESPILFAEFHPRNNDLCLIVLQKGTDPILLNFKSSEKTPLNIKSLVTSYIKREENSTGVIPTSVNSNYNGVATFASFNRRGEKIFFGDSCGMISVLDFKSMTIDRQFKVASSNTTVKQIEFSRNHRFMLVSSSDKVLRLISLESTNLYQQMREYQDSVNRMHWKKCCFSSNNEYVVGGMNHKSIHSIFIWSVSGSLVKDLEGPKEGLVDVVWHPLRPIIVSISFTGVIYVWTAYFEENWSSFAPDFQELEENLDYVEDEDEFDAKDSDNENQEVNNNNNNNIGRNPYKKIKTQQELNDKNSEEEEFVDVDHNDRITEFSSDEEEDLFCFSAIDDRYVSNVKFDDPRHPLYEKYQKDKEDSSSTTSNSTISSSSSPSPSSSSTTTTTTTSQKKDETQKKEKSTKKERNSDSKKRK.

WD repeat units lie at residues Pro-25–Thr-66, His-69–Ser-108, Ser-222–Gln-261, Asp-267–Glu-312, and Gly-313–Ser-352. 2 disordered regions span residues Asp-371–Tyr-398 and Glu-462–Lys-525. Residues Gln-383–Asn-392 show a composition bias toward low complexity. A compositionally biased stretch (basic and acidic residues) spans Glu-462–Ser-471. The segment covering Ser-472–Ser-500 has biased composition (low complexity). Basic and acidic residues predominate over residues Gln-501–Lys-525.

It is found in the nucleus. Its function is as follows. Involved in mono-, di- and trimethylation at 'Lys-4' of histone H3. Histone H3 'Lys-4' methylation represents a specific tag for epigenetic transcriptional activation. The protein is Retinoblastoma-binding-like protein E of Dictyostelium discoideum (Social amoeba).